The following is a 349-amino-acid chain: Phenylalanine--tRNA ligase alpha subunit (349 aa).

Mg(2+) is bound at residue E262.

It belongs to the class-II aminoacyl-tRNA synthetase family. Phe-tRNA synthetase alpha subunit type 1 subfamily. In terms of assembly, tetramer of two alpha and two beta subunits. The cofactor is Mg(2+).

The protein localises to the cytoplasm. It carries out the reaction tRNA(Phe) + L-phenylalanine + ATP = L-phenylalanyl-tRNA(Phe) + AMP + diphosphate + H(+). The sequence is that of Phenylalanine--tRNA ligase alpha subunit from Sorangium cellulosum (strain So ce56) (Polyangium cellulosum (strain So ce56)).